The chain runs to 99 residues: Protein dpy-30 homolog (99 aa).

Met1 carries the N-acetylmethionine modification. The tract at residues 1–26 (MEPEQMLEGQTQVAENPHSEYGLTDN) is disordered. Residue Ser19 is modified to Phosphoserine. Position 35 is an N6-acetyllysine; alternate (Lys35). Lys35 is covalently cross-linked (Glycyl lysine isopeptide (Lys-Gly) (interchain with G-Cter in SUMO2); alternate).

This sequence belongs to the dpy-30 family. In terms of assembly, homodimer. Core component of several methyltransferase-containing complexes including MLL1/MLL, MLL2/3 (also named ASCOM complex) and MLL4/WBP7. Each complex is at least composed of ASH2L, RBBP5, WDR5, DPY30, one or more specific histone methyltransferases (KMT2A/MLL1, KMT2D/MLL2, KMT2C/MLL3 and KMT2B/MLL4), and the facultative components MEN1, HCFC1, HCFC2, NCOA6, KDM6A, PAXIP1/PTIP, PAGR1 and alpha- and beta-tubulin. Interacts with ASH2L; the interaction is direct. Interacts with ARFGEF1. Component of the SET1 complex, at least composed of the catalytic subunit (SETD1A or SETD1B), WDR5, WDR82, RBBP5, ASH2L/ASH2, CXXC1/CFP1, HCFC1 and DPY30.

It localises to the nucleus. The protein resides in the golgi apparatus. It is found in the trans-Golgi network. Its function is as follows. As part of the MLL1/MLL complex, involved in the methylation of histone H3 at 'Lys-4', particularly trimethylation. Histone H3 'Lys-4' methylation represents a specific tag for epigenetic transcriptional activation. May play some role in histone H3 acetylation. In embryonic stem cells, may play a crucial role in retinoic acid-induced differentiation along the neural lineage, regulating gene induction and H3 'Lys-4' methylation at key developmental loci. May also play an indirect or direct role in endosomal transport. The protein is Protein dpy-30 homolog (DPY30) of Bos taurus (Bovine).